The primary structure comprises 143 residues: 3-hydroxyacyl-[acyl-carrier-protein] dehydratase FabZ (143 aa).

Residue His47 is part of the active site.

This sequence belongs to the thioester dehydratase family. FabZ subfamily.

The protein resides in the cytoplasm. It catalyses the reaction a (3R)-hydroxyacyl-[ACP] = a (2E)-enoyl-[ACP] + H2O. Involved in unsaturated fatty acids biosynthesis. Catalyzes the dehydration of short chain beta-hydroxyacyl-ACPs and long chain saturated and unsaturated beta-hydroxyacyl-ACPs. This Rickettsia canadensis (strain McKiel) protein is 3-hydroxyacyl-[acyl-carrier-protein] dehydratase FabZ.